A 304-amino-acid chain; its full sequence is Porphobilinogen deaminase (304 aa).

The residue at position 241 (cysteine 241) is an S-(dipyrrolylmethanemethyl)cysteine.

Belongs to the HMBS family. In terms of assembly, monomer. Dipyrromethane serves as cofactor.

The catalysed reaction is 4 porphobilinogen + H2O = hydroxymethylbilane + 4 NH4(+). The protein operates within porphyrin-containing compound metabolism; protoporphyrin-IX biosynthesis; coproporphyrinogen-III from 5-aminolevulinate: step 2/4. Functionally, tetrapolymerization of the monopyrrole PBG into the hydroxymethylbilane pre-uroporphyrinogen in several discrete steps. This Vesicomyosocius okutanii subsp. Calyptogena okutanii (strain HA) protein is Porphobilinogen deaminase.